Consider the following 863-residue polypeptide: Ubiquitin carboxyl-terminal hydrolase 13 (863 aa).

At Ser-114 the chain carries Phosphoserine. Thr-122 is modified (phosphothreonine). A UBP-type; degenerate zinc finger spans residues Pro-187–Met-295. Residues Cys-211, Cys-214, Cys-231, and His-244 each coordinate Zn(2+). A Glycyl lysine isopeptide (Lys-Gly) (interchain with G-Cter in SUMO2) cross-link involves residue Lys-311. The USP domain occupies Thr-336–Ile-861. The active-site Nucleophile is the Cys-345. Lys-405 participates in a covalent cross-link: Glycyl lysine isopeptide (Lys-Gly) (interchain with G-Cter in SUMO2). UBA domains lie at Asp-652–His-693 and Gln-727–His-767. His-823 acts as the Proton acceptor in catalysis.

It belongs to the peptidase C19 family. Interacts with UFD1. Interacts (via UBA domains) with SIAH2 (when ubiquitinated). Interacts with BAG6; the interaction is direct and may mediate UBL4A deubiquitination. Interacts (via UBA 2 domain) with AMFR; the interaction is direct. Interacts with UBL4A; may be indirect via BAG6. Interacts with NEDD4.

Its subcellular location is the cytoplasm. The enzyme catalyses Thiol-dependent hydrolysis of ester, thioester, amide, peptide and isopeptide bonds formed by the C-terminal Gly of ubiquitin (a 76-residue protein attached to proteins as an intracellular targeting signal).. Its activity is regulated as follows. Specifically inhibited by spautin-1 (specific and potent autophagy inhibitor-1), a derivative of MBCQ that binds to USP13 and inhibits deubiquitinase activity. Regulated by PIK3C3/VPS34-containing complexes. The weak deubiquitinase activity in vitro suggests the existence of some mechanism that activates the enzyme. Deubiquitinase that mediates deubiquitination of target proteins such as BECN1, MITF, SKP2 and USP10 and is involved in various processes such as autophagy, endoplasmic reticulum-associated degradation (ERAD), cell cycle progression or DNA damage response. Component of a regulatory loop that controls autophagy and p53/TP53 levels: mediates deubiquitination of BECN1, a key regulator of autophagy, leading to stabilize the PIK3C3/VPS34-containing complexes. Alternatively, forms with NEDD4 a deubiquitination complex, which subsequently stabilizes VPS34 to promote autophagy. Also deubiquitinates USP10, an essential regulator of p53/TP53 stability. In turn, PIK3C3/VPS34-containing complexes regulate USP13 stability, suggesting the existence of a regulatory system by which PIK3C3/VPS34-containing complexes regulate p53/TP53 protein levels via USP10 and USP13. Recruited by nuclear UFD1 and mediates deubiquitination of SKP2, thereby regulating endoplasmic reticulum-associated degradation (ERAD). Also regulates ERAD through the deubiquitination of UBL4A a component of the BAG6/BAT3 complex. Mediates stabilization of SIAH2 independently of deubiquitinase activity: binds ubiquitinated SIAH2 and acts by impairing SIAH2 autoubiquitination. Regulates the cell cycle progression by stabilizing cell cycle proteins such as SKP2 and AURKB. In addition, plays an important role in maintaining genomic stability and in DNA replication checkpoint activation via regulation of RAP80 and TOPBP1. Deubiquitinates the multifunctional protein HMGB1 and subsequently drives its nucleocytoplasmic localization and its secretion. Positively regulates type I and type II interferon signalings by deubiquitinating STAT1 but negatively regulates antiviral response by deubiquitinating STING1. This Bos taurus (Bovine) protein is Ubiquitin carboxyl-terminal hydrolase 13 (USP13).